The following is a 261-amino-acid chain: Ribonuclease HII (261 aa).

Residues 71-259 enclose the RNase H type-2 domain; it reads KYIAGVDEVG…VKEAKLHFDS (189 aa). A divalent metal cation contacts are provided by Asp77, Glu78, and Asp169.

This sequence belongs to the RNase HII family. The cofactor is Mn(2+). Mg(2+) is required as a cofactor.

The protein resides in the cytoplasm. It carries out the reaction Endonucleolytic cleavage to 5'-phosphomonoester.. Its function is as follows. Endonuclease that specifically degrades the RNA of RNA-DNA hybrids. This is Ribonuclease HII from Listeria monocytogenes serotype 4b (strain F2365).